Reading from the N-terminus, the 687-residue chain is Threonine--tRNA ligase (687 aa).

Positions 1–67 (MAHLIEAAPN…EQDSKFTPVP (67 aa)) constitute a TGS domain. Residues 266-572 (DHRRLGAELD…LLEHYAGAFP (307 aa)) form a catalytic region. Zn(2+) is bound by residues cysteine 371, histidine 422, and histidine 549.

The protein belongs to the class-II aminoacyl-tRNA synthetase family. Homodimer. Requires Zn(2+) as cofactor.

The protein resides in the cytoplasm. The catalysed reaction is tRNA(Thr) + L-threonine + ATP = L-threonyl-tRNA(Thr) + AMP + diphosphate + H(+). Functionally, catalyzes the attachment of threonine to tRNA(Thr) in a two-step reaction: L-threonine is first activated by ATP to form Thr-AMP and then transferred to the acceptor end of tRNA(Thr). Also edits incorrectly charged L-seryl-tRNA(Thr). In Corynebacterium diphtheriae (strain ATCC 700971 / NCTC 13129 / Biotype gravis), this protein is Threonine--tRNA ligase.